The primary structure comprises 361 residues: Plasmid recombination enzyme (361 aa).

Tyr44 and Tyr114 together coordinate DNA. The segment at Arg331–Leu361 is disordered.

The protein belongs to the plasmid mobilization pre family.

Its function is as follows. The interaction of the RSA site and the pre protein may not only serve a function in plasmid maintenance, but also contribute to the distribution of small antibiotic resistance plasmids among Gram-positive bacteria. This Lactiplantibacillus plantarum (Lactobacillus plantarum) protein is Plasmid recombination enzyme (preA).